Reading from the N-terminus, the 270-residue chain is MNLPNRGEGNRNGRVGKNFGRALNYHRKALVQQHVADELAERLVDFPLPERPRVLEIGCGTGFLSRHLMRQWPGGSFLFTDISAPMLVRCQSHLSDLPGQRQFMVMDGEHCAVRGPFDLVVSSMAMQWFGDLPGALQGLSSLLKTNGMLAFATLGDETFREWRGVCAQYGSPFGRPDYPDVAQLQEMWPSGGEGDVEEDHIPVAHSSGHGFLRALREVGAHQPSGQHRPVSAALMRRMLQATRGGQHGFTVTYHVLYGFYTRSFDDRPIH.

This sequence belongs to the methyltransferase superfamily.

It carries out the reaction malonyl-[ACP] + S-adenosyl-L-methionine = malonyl-[ACP] methyl ester + S-adenosyl-L-homocysteine. It participates in cofactor biosynthesis; biotin biosynthesis. Functionally, converts the free carboxyl group of a malonyl-thioester to its methyl ester by transfer of a methyl group from S-adenosyl-L-methionine (SAM). It allows to synthesize pimeloyl-ACP via the fatty acid synthetic pathway. This chain is Malonyl-[acyl-carrier protein] O-methyltransferase, found in Magnetococcus marinus (strain ATCC BAA-1437 / JCM 17883 / MC-1).